The sequence spans 790 residues: Ribosome biogenesis protein ERB1 (790 aa).

The disordered stretch occupies residues 1–93; sequence MAKKNTVTGS…SDELQDDSNS (93 aa). The segment covering 20-89 has biased composition (acidic residues); it reads SPEVSESEEI…SEDFSDELQD (70 aa). Residues 255–371 are required for interaction with NOP7; it reads RFVPSKHEAK…LRKVPAYQEN (117 aa). Residues 371-407 are required for interaction with YTM1; the sequence is NLRERFERSLDLYLAPRVRHNKLNIDPDSLIPDLPSP. 7 WD repeats span residues 423–462, 470–510, 574–616, 619–657, 660–699, 703–743, and 759–790; these read GHIGRVRTLSIDPSGLWLATGGDDGTVRVWEILTGRQVYH, KDDD…YEIE, QCRK…SQSP, KSKGIIVDAKFHPFKPQLFVASQRSIKIYDLSQQVLTKK, PGARYLSGIDIHPRGDHLLASSYDKRVLWHDLDLSNTPYK, YHEK…DLMT, and VHSLGVLDLVWHPKEAWLFTAGADGTARLWTT.

This sequence belongs to the WD repeat BOP1/ERB1 family. As to quaternary structure, component of the NOP7 complex, composed of ERB1, NOP7 and YTM1. The complex is held together by ERB1, which interacts with NOP7 via its N-terminal domain and with YTM1 via a high-affinity interaction between the seven-bladed beta-propeller domains of the 2 proteins. The NOP7 complex associates with the 66S pre-ribosome.

It localises to the nucleus. The protein resides in the nucleolus. It is found in the nucleoplasm. Functionally, component of the NOP7 complex, which is required for maturation of the 25S and 5.8S ribosomal RNAs and formation of the 60S ribosome. The polypeptide is Ribosome biogenesis protein ERB1 (Meyerozyma guilliermondii (strain ATCC 6260 / CBS 566 / DSM 6381 / JCM 1539 / NBRC 10279 / NRRL Y-324) (Yeast)).